The chain runs to 126 residues: Holo-[acyl-carrier-protein] synthase (126 aa).

The Mg(2+) site is built by Asp-9 and Glu-57.

It belongs to the P-Pant transferase superfamily. AcpS family. Requires Mg(2+) as cofactor.

It localises to the cytoplasm. The catalysed reaction is apo-[ACP] + CoA = holo-[ACP] + adenosine 3',5'-bisphosphate + H(+). In terms of biological role, transfers the 4'-phosphopantetheine moiety from coenzyme A to a Ser of acyl-carrier-protein. The protein is Holo-[acyl-carrier-protein] synthase of Idiomarina loihiensis (strain ATCC BAA-735 / DSM 15497 / L2-TR).